Consider the following 208-residue polypeptide: Ribosomal RNA large subunit methyltransferase E (208 aa).

The S-adenosyl-L-methionine site is built by G63, W65, D83, D99, and D124. K164 functions as the Proton acceptor in the catalytic mechanism.

This sequence belongs to the class I-like SAM-binding methyltransferase superfamily. RNA methyltransferase RlmE family.

It localises to the cytoplasm. The catalysed reaction is uridine(2552) in 23S rRNA + S-adenosyl-L-methionine = 2'-O-methyluridine(2552) in 23S rRNA + S-adenosyl-L-homocysteine + H(+). Its function is as follows. Specifically methylates the uridine in position 2552 of 23S rRNA at the 2'-O position of the ribose in the fully assembled 50S ribosomal subunit. The protein is Ribosomal RNA large subunit methyltransferase E of Blochmanniella pennsylvanica (strain BPEN).